Here is a 258-residue protein sequence, read N- to C-terminus: Phosphate import ATP-binding protein PstB 3 (258 aa).

Residues 10 to 253 (MTARSLAVHY…PANSLTQGYI (244 aa)) enclose the ABC transporter domain. 42–49 (GPSGCGKS) is an ATP binding site.

This sequence belongs to the ABC transporter superfamily. Phosphate importer (TC 3.A.1.7) family. In terms of assembly, the complex is composed of two ATP-binding proteins (PstB), two transmembrane proteins (PstC and PstA) and a solute-binding protein (PstS).

It localises to the cell inner membrane. It carries out the reaction phosphate(out) + ATP + H2O = ADP + 2 phosphate(in) + H(+). In terms of biological role, part of the ABC transporter complex PstSACB involved in phosphate import. Responsible for energy coupling to the transport system. This Paramagnetospirillum magneticum (strain ATCC 700264 / AMB-1) (Magnetospirillum magneticum) protein is Phosphate import ATP-binding protein PstB 3.